We begin with the raw amino-acid sequence, 482 residues long: 2-succinylbenzoate--CoA ligase (482 aa).

Belongs to the ATP-dependent AMP-binding enzyme family. MenE subfamily.

It catalyses the reaction 2-succinylbenzoate + ATP + CoA = 2-succinylbenzoyl-CoA + AMP + diphosphate. It functions in the pathway quinol/quinone metabolism; 1,4-dihydroxy-2-naphthoate biosynthesis; 1,4-dihydroxy-2-naphthoate from chorismate: step 5/7. Its pathway is quinol/quinone metabolism; menaquinone biosynthesis. In terms of biological role, converts 2-succinylbenzoate (OSB) to 2-succinylbenzoyl-CoA (OSB-CoA). The polypeptide is 2-succinylbenzoate--CoA ligase (Bacillus cereus (strain AH820)).